A 317-amino-acid chain; its full sequence is 2,3-dihydroxyphenylpropionate/2,3-dihydroxicinnamic acid 1,2-dioxygenase (317 aa).

Residue histidine 115 is the Proton donor of the active site. The active-site Proton acceptor is the histidine 179.

Belongs to the LigB/MhpB extradiol dioxygenase family. Homotetramer. Requires Fe(2+) as cofactor.

It catalyses the reaction 3-(2,3-dihydroxyphenyl)propanoate + O2 = (2Z,4E)-2-hydroxy-6-oxonona-2,4-dienedioate + H(+). It carries out the reaction (2E)-3-(2,3-dihydroxyphenyl)prop-2-enoate + O2 = (2Z,4E,7E)-2-hydroxy-6-oxonona-2,4,7-trienedioate + H(+). It participates in aromatic compound metabolism; 3-phenylpropanoate degradation. Functionally, catalyzes the non-heme iron(II)-dependent oxidative cleavage of 2,3-dihydroxyphenylpropionic acid and 2,3-dihydroxicinnamic acid into 2-hydroxy-6-ketononadienedioate and 2-hydroxy-6-ketononatrienedioate, respectively. In Photorhabdus laumondii subsp. laumondii (strain DSM 15139 / CIP 105565 / TT01) (Photorhabdus luminescens subsp. laumondii), this protein is 2,3-dihydroxyphenylpropionate/2,3-dihydroxicinnamic acid 1,2-dioxygenase.